A 494-amino-acid chain; its full sequence is Glutamate--tRNA ligase (494 aa).

The short motif at 10–20 is the 'HIGH' region element; the sequence is PSPTGDPHVGT. Positions 107, 109, 134, and 136 each coordinate Zn(2+). Residues 251-255 carry the 'KMSKS' region motif; the sequence is KLSKR. Lysine 254 serves as a coordination point for ATP.

The protein belongs to the class-I aminoacyl-tRNA synthetase family. Glutamate--tRNA ligase type 1 subfamily. As to quaternary structure, monomer. Zn(2+) serves as cofactor.

Its subcellular location is the cytoplasm. The enzyme catalyses tRNA(Glu) + L-glutamate + ATP = L-glutamyl-tRNA(Glu) + AMP + diphosphate. In terms of biological role, catalyzes the attachment of glutamate to tRNA(Glu) in a two-step reaction: glutamate is first activated by ATP to form Glu-AMP and then transferred to the acceptor end of tRNA(Glu). The polypeptide is Glutamate--tRNA ligase (Pseudomonas paraeruginosa (strain DSM 24068 / PA7) (Pseudomonas aeruginosa (strain PA7))).